A 222-amino-acid polypeptide reads, in one-letter code: Pyridoxine/pyridoxamine 5'-phosphate oxidase (222 aa).

Residues 11-14 (RVEY) and Lys79 each bind substrate. FMN-binding positions include 74–79 (RTVLCK), 89–90 (YT), Lys96, and Gln118. Substrate is bound by residues Tyr136, Arg140, and Ser144. FMN is bound by residues 153–154 (QS) and Trp199. Residue 205–207 (RVH) coordinates substrate. Residue Arg209 coordinates FMN.

Belongs to the pyridoxamine 5'-phosphate oxidase family. In terms of assembly, homodimer. FMN serves as cofactor.

The enzyme catalyses pyridoxamine 5'-phosphate + O2 + H2O = pyridoxal 5'-phosphate + H2O2 + NH4(+). The catalysed reaction is pyridoxine 5'-phosphate + O2 = pyridoxal 5'-phosphate + H2O2. It participates in cofactor metabolism; pyridoxal 5'-phosphate salvage; pyridoxal 5'-phosphate from pyridoxamine 5'-phosphate: step 1/1. The protein operates within cofactor metabolism; pyridoxal 5'-phosphate salvage; pyridoxal 5'-phosphate from pyridoxine 5'-phosphate: step 1/1. Functionally, catalyzes the oxidation of either pyridoxine 5'-phosphate (PNP) or pyridoxamine 5'-phosphate (PMP) into pyridoxal 5'-phosphate (PLP). The sequence is that of Pyridoxine/pyridoxamine 5'-phosphate oxidase from Mycolicibacterium vanbaalenii (strain DSM 7251 / JCM 13017 / BCRC 16820 / KCTC 9966 / NRRL B-24157 / PYR-1) (Mycobacterium vanbaalenii).